Consider the following 300-residue polypeptide: GTPase Era (300 aa).

Residues 6–173 (KSGFVAIVGR…MDVLVEQMPE (168 aa)) enclose the Era-type G domain. Positions 14 to 21 (GRPNVGKS) are G1. 14–21 (GRPNVGKS) is a GTP binding site. A G2 region spans residues 40 to 44 (QTTRN). Residues 61 to 64 (DTPG) form a G3 region. GTP-binding positions include 61 to 65 (DTPGI) and 123 to 126 (NKID). A G4 region spans residues 123 to 126 (NKID). The segment at 152-154 (ISA) is G5. One can recognise a KH type-2 domain in the interval 204 to 281 (TRDEIPHSVA…YLELWVKVQK (78 aa)).

Belongs to the TRAFAC class TrmE-Era-EngA-EngB-Septin-like GTPase superfamily. Era GTPase family. As to quaternary structure, monomer.

The protein resides in the cytoplasm. It is found in the cell membrane. In terms of biological role, an essential GTPase that binds both GDP and GTP, with rapid nucleotide exchange. Plays a role in 16S rRNA processing and 30S ribosomal subunit biogenesis and possibly also in cell cycle regulation and energy metabolism. The protein is GTPase Era of Enterococcus faecalis (strain ATCC 700802 / V583).